The sequence spans 613 residues: Autophagy-related protein 22-2 (613 aa).

The interval 1–28 (MVLNSTPPASPGAEAQQRPPRYPGEDTA) is disordered. Residues 41 to 61 (YGIAAEVFAVCGVGSFLPLTL) traverse the membrane as a helical segment. A compositionally biased stretch (polar residues) spans 80–96 (GSSSPSTAPGNGTTTAT). The segment at 80–99 (GSSSPSTAPGNGTTTATLRR) is disordered. A glycan (N-linked (GlcNAc...) asparagine) is linked at Asn-90. Transmembrane regions (helical) follow at residues 120-140 (SFAM…LISF), 155-177 (LAFG…PVYI), and 189-209 (CLGS…ANDP). The interval 216–257 (KEEGEELSPVNSSGEFARSEDLDEENVRDSDDHFTTGHGLKT) is disordered. N-linked (GlcNAc...) asparagine glycosylation is present at Asn-226. The segment covering 232–250 (ARSEDLDEENVRDSDDHFT) has biased composition (basic and acidic residues). Transmembrane regions (helical) follow at residues 278-298 (VGLG…MLFA), 307-327 (ISGT…WFSF), 382-402 (VIVF…VSGT), and 418-438 (VGLL…LWPV). N-linked (GlcNAc...) asparagine glycosylation is present at Asn-448. Transmembrane regions (helical) follow at residues 453 to 473 (LCIA…IPLF), 488 to 510 (FPLG…SFFG), 522 to 544 (YALY…GMLI), and 553 to 573 (GFFF…MVNA). Positions 592-613 (GEHASEYGGPSEEAEGLLARDI) are disordered.

It belongs to the ATG22 family.

Its subcellular location is the vacuole membrane. Functionally, vacuolar effluxer which mediate the efflux of amino acids resulting from autophagic degradation. The release of autophagic amino acids allows the maintenance of protein synthesis and viability during nitrogen starvation. This Neosartorya fischeri (strain ATCC 1020 / DSM 3700 / CBS 544.65 / FGSC A1164 / JCM 1740 / NRRL 181 / WB 181) (Aspergillus fischerianus) protein is Autophagy-related protein 22-2 (atg22-2).